The chain runs to 438 residues: GTPase Obg (438 aa).

Residues 2 to 160 (SMFLDQVTID…RKIELELKVL (159 aa)) form the Obg domain. Residues 128 to 147 (NIRFASPRNPAPEIAENGEP) are disordered. The OBG-type G domain maps to 161–339 (ADVGLVGFPS…LLNATADLLE (179 aa)). GTP is bound by residues 167–174 (GFPSVGKS), 192–196 (FTTLV), 214–217 (DLPG), 284–287 (NKMD), and 320–322 (SGV). 2 residues coordinate Mg(2+): S174 and T194. One can recognise an OCT domain in the interval 360 to 438 (GFQPEGPEFT…IGNFEFEFVE (79 aa)).

Belongs to the TRAFAC class OBG-HflX-like GTPase superfamily. OBG GTPase family. As to quaternary structure, monomer. The cofactor is Mg(2+).

The protein localises to the cytoplasm. Functionally, an essential GTPase which binds GTP, GDP and possibly (p)ppGpp with moderate affinity, with high nucleotide exchange rates and a fairly low GTP hydrolysis rate. Plays a role in control of the cell cycle, stress response, ribosome biogenesis and in those bacteria that undergo differentiation, in morphogenesis control. This chain is GTPase Obg, found in Enterococcus faecalis (strain ATCC 700802 / V583).